The sequence spans 487 residues: MTTHYIAGNWQAGQGETLQSLNPVTQAVIWQGQGADASQVDTAVQAARQAFPAWAQLSLEARIDVLEKFAAQLKVHAEAMAQCIGEETGKPLWESATEVTSMINKVAISVQSYRERTGEKSGPLADATAVLRHKPHGVVAVFGPYNFPGHLPNGHIVPALLAGNCVVFKPSELTPKVAELTVNCWIAAGLPAGVLNLVQGARETGVALAANPGIDGLFFTGSSRTGNLLHQQFAGRPDKILALEMGGNNPLVVDEVKDLDAAVYTIVQSAFISAGQRCTCARRLLVPQGAWGDALIARLVEVCKTITVGAFDEQPAPFMGSVISLQAARALLAAQVELAAKGGVKLLEMTQPQADAALLTPGIVDVTAVADRPDEEFFGPLLQVIRYGDFDAAIDEANNTQYGLAAGLLSDSRARYQYFWLRSRAGIVNWNKQLTGAASSAPFGGVGASGNHRASAYYAADYCAYPVASLETASLALPATLTPGVTL.

NAD(+) is bound at residue 221–226 (GSSRTG). Catalysis depends on residues Glu244 and Cys278.

This sequence belongs to the aldehyde dehydrogenase family. AstD subfamily.

The enzyme catalyses N-succinyl-L-glutamate 5-semialdehyde + NAD(+) + H2O = N-succinyl-L-glutamate + NADH + 2 H(+). Its pathway is amino-acid degradation; L-arginine degradation via AST pathway; L-glutamate and succinate from L-arginine: step 4/5. Catalyzes the NAD-dependent reduction of succinylglutamate semialdehyde into succinylglutamate. The protein is N-succinylglutamate 5-semialdehyde dehydrogenase of Pseudomonas putida (strain ATCC 700007 / DSM 6899 / JCM 31910 / BCRC 17059 / LMG 24140 / F1).